The primary structure comprises 106 residues: Large ribosomal subunit protein uL24 (106 aa).

Belongs to the universal ribosomal protein uL24 family. In terms of assembly, part of the 50S ribosomal subunit.

In terms of biological role, one of two assembly initiator proteins, it binds directly to the 5'-end of the 23S rRNA, where it nucleates assembly of the 50S subunit. One of the proteins that surrounds the polypeptide exit tunnel on the outside of the subunit. The chain is Large ribosomal subunit protein uL24 from Polaromonas naphthalenivorans (strain CJ2).